The sequence spans 842 residues: Glycogen phosphorylase, muscle form (842 aa).

S2 bears the N-acetylserine mark. S15 carries the post-translational modification Phosphoserine; by PHK; in form phosphorylase A. S26 bears the Phosphoserine mark. AMP-binding residues include D43 and Y76. Y204 and Y227 each carry phosphotyrosine. Residue 310–319 coordinates AMP; sequence RRFKSSKFGC. The residue at position 430 (S430) is a Phosphoserine. Y473 bears the Phosphotyrosine mark. S514 carries the post-translational modification Phosphoserine. K681 carries the post-translational modification N6-(pyridoxal phosphate)lysine. Phosphoserine occurs at positions 747 and 748.

The protein belongs to the glycogen phosphorylase family. Homodimer. Homotetramer; to form the enzymatically active phosphorylase A. Pyridoxal 5'-phosphate serves as cofactor. Post-translationally, phosphorylation of Ser-15 converts phosphorylase B (unphosphorylated) to phosphorylase A.

It carries out the reaction [(1-&gt;4)-alpha-D-glucosyl](n) + phosphate = [(1-&gt;4)-alpha-D-glucosyl](n-1) + alpha-D-glucose 1-phosphate. Allosterically regulated through the non-covalent binding of metabolites, being activated by AMP and inhibited by ATP, ADP, and glucose-6-phosphate. The activity is also controlled by post-translational modifications including phosphorylation. Allosteric enzyme that catalyzes the rate-limiting step in glycogen catabolism, the phosphorolytic cleavage of glycogen to produce glucose-1-phosphate, and plays a central role in maintaining cellular and organismal glucose homeostasis. The chain is Glycogen phosphorylase, muscle form from Rattus norvegicus (Rat).